We begin with the raw amino-acid sequence, 617 residues long: Vitamin B12 transporter BtuB (617 aa).

A signal peptide spans 1-22 (MRKTFLAITCASLLSPTFYSQA). A TonB box motif is present at residues 29–36 (ETVVVTAN). In terms of domain architecture, TBDR plug spans 40–154 (QIDGAVLAQT…ISGVINIITR (115 aa)). The TBDR beta-barrel domain occupies 159–617 (DDSGRVSAGY…QYFVSADYRF (459 aa)). The TonB C-terminal box motif lies at 600–617 (VGYVTPGRQYFVSADYRF).

This sequence belongs to the TonB-dependent receptor family. BtuB (TC 1.B.14.3.1) subfamily.

The protein localises to the cell outer membrane. Its function is as follows. Involved in the active translocation of vitamin B12 (cyanocobalamin) across the outer membrane to the periplasmic space. It derives its energy for transport by interacting with the trans-periplasmic membrane protein TonB. The chain is Vitamin B12 transporter BtuB from Vibrio campbellii (strain ATCC BAA-1116).